Here is a 124-residue protein sequence, read N- to C-terminus: Quinol oxidase subunit 4 (124 aa).

Transmembrane regions (helical) follow at residues 16–36 (IVGF…AVYT), 44–64 (LWII…MFMH), and 78–98 (TLFG…IFAA).

The protein belongs to the cytochrome c oxidase bacterial subunit 4 family.

The protein localises to the cell membrane. The enzyme catalyses 2 a quinol + O2 = 2 a quinone + 2 H2O. In terms of biological role, catalyzes quinol oxidation with the concomitant reduction of oxygen to water. Major component for energy conversion during vegetative growth. The protein is Quinol oxidase subunit 4 (qoxD) of Bacillus subtilis (strain 168).